Reading from the N-terminus, the 530-residue chain is Transcription factor SPT20 homolog (530 aa).

S296 carries the phosphoserine modification. The tract at residues 419-530 is disordered; that stretch reads CPVKMSHSSS…PASSSQRHES (112 aa). Composition is skewed to low complexity over residues 424–436 and 466–475; these read SHSS…LNSG and SSSGNSSSGN. T490 bears the Phosphothreonine mark. A compositionally biased stretch (low complexity) spans 514 to 530; that stretch reads LSPAALSPASSSQRHES. 2 positions are modified to phosphoserine: S515 and S520.

It belongs to the SPT20 family. In terms of assembly, interacts with ATG9A. Interacts with MAPK14.

Functionally, required for MAP kinase p38 (MAPK11, MAPK12, MAPK13 and/or MAPK14) activation during gastrulation. Required for down-regulation of E-cadherin during gastrulation by regulating E-cadherin protein level downstream from NCK-interacting kinase (NIK) and independently of the regulation of transcription by FGF signaling and Snail. Required for starvation-induced ATG9A trafficking during autophagy. This Rattus norvegicus (Rat) protein is Transcription factor SPT20 homolog (Supt20h).